Consider the following 292-residue polypeptide: Elongation factor Ts (292 aa).

Residues 80–83 are involved in Mg(2+) ion dislocation from EF-Tu; it reads TDFV.

This sequence belongs to the EF-Ts family.

The protein localises to the cytoplasm. Its function is as follows. Associates with the EF-Tu.GDP complex and induces the exchange of GDP to GTP. It remains bound to the aminoacyl-tRNA.EF-Tu.GTP complex up to the GTP hydrolysis stage on the ribosome. The protein is Elongation factor Ts of Mycoplasmopsis synoviae (strain 53) (Mycoplasma synoviae).